Consider the following 32-residue polypeptide: Cruzioseptin-9 (32 aa).

Q29 carries the post-translational modification Glutamine amide. A propeptide spanning residues 31-32 (EQ) is cleaved from the precursor.

In terms of tissue distribution, expressed by the skin glands.

It is found in the secreted. Functionally, has antimicrobial activity. This chain is Cruzioseptin-9, found in Cruziohyla calcarifer (Splendid leaf frog).